The following is a 147-amino-acid chain: Large ribosomal subunit protein uL13 (147 aa).

Belongs to the universal ribosomal protein uL13 family. Part of the 50S ribosomal subunit.

Its function is as follows. This protein is one of the early assembly proteins of the 50S ribosomal subunit, although it is not seen to bind rRNA by itself. It is important during the early stages of 50S assembly. This chain is Large ribosomal subunit protein uL13, found in Salinispora arenicola (strain CNS-205).